Here is a 1390-residue protein sequence, read N- to C-terminus: MNVQQTQQQQAMAAQQQSMVAQQQQQIAQQQSAIAQQQIAQQQQIAQQQQIAQQQQQHQQHQQHQQQHQQQQQHQQQHQQQQHIQQQQQPQQQQPQQQQSQQQQQQHQQQQQPQQQQPPQQQQQQPPQQQQQPQQQQQQQQQQQQQPQQQQQQQQQDQLSGVTGKIRDLNESIWIHLGGYAESIGEQDKALASYENALRHNPFSIKALTQIASLFRIKEQYSKAAEYFQRIVTIESKNGEVWGALGHCYLMMDDLQKAYTAYQQALYHLPNPKDPNLWYGIGILYDRYGSYDHAEEAFTAVLKMDNKFEKSTEIYFRLGVLYKHQGKYDQSLEYFQHLVKNPPLPLTTSDIWFQIGHVYELQKEYHKSKDAYEKVLKDNATHSKVLQQLGWLYHHNPLFTNQEYAINYLMRSIDSDSSDAQTWYLLGRCYMTQQKYKKAYDAYQQAVYRDGRNPTFWCSIGVLYYQINQYRDALDAYTRAIRLNPFLSEVWYDLGTLYESCHQHTDSLDAYQRAAELDPHNKHIQSRLATLRAQVSGKPIGKDGYDLQNGEHGEHGGKSTPMIIEPNSPGTGAMESLGKGGQNNRNGNNNGNNSFVPELAEINSHLPEDMRNNSSLPSSNELNSSLIDRKTERGRGEDMHNSHHSQYSNSMSMNNMNNNNNNMNMNNNMNNNMNNMNNNNNNMNSMNNMNNNNNNINNNMSNNNNNNHNNHQMNQYNNNNNNSNINNNNNNHHNMNDNVNSKNNDVLDRRYKGILEREKTSPNGDGRDNRDNIRDNRDNRDSRDGRDNRDGRDSRDRIQEYTREYNNNNNNNNSISSINNNNNNNNNNYNNNNNNNNNNNNNNNNNGLRATSPLPSHNDRRSYERDNKERINNNNNNNNNMNNNMNNNMNNMNNNNNNSNISRFEHQNNRTSSPFENNSNNNNNNNNNNNNNINYNNIGQRALSPQSSQHKDRREIILDEESDINERSKTRSPSIVKEAEEKRETVIVDKERSPTPIITEKPDEKQVEKVTDKESSLVEKVDKENEKESPSSSSSSKEIEKETEKEKEKEKEKEKEVEKEVEKEIENDKEKEKEKEVEKDVEENKSVEKSSEKPVEKESTTTTTNDEDEEGELSEPTTTTKKDDSSKLPTDEKKLSSVSPTTTAVEQSRDETKELEMDTKEDSEKEKKSSTTTTAAASESVKPIDEEKKSPTTTTTTTTNTTTVEPTHKDKESSKNDDTTTTTTTTTTKSAKSPNSSPTRSDEVVEPHQDASQEEINKRKLEDDITSTPSKRLKPDSTPSSATTASTPSEQPESPLKKENPVGETLSPEIKDSKSSSSSSSSSSSSTNTGSSSTNSSAKNERDRDRERERERERDREREREREREREREREKNKQPTRAPIKPSSRKLER.

The segment at 53-143 (QQQQQHQQHQ…QQQQQQQQQQ (91 aa)) is disordered. TPR repeat units lie at residues 171–204 (ESIWIHLGGYAESIGEQDKALASYENALRHNPFS), 206–238 (KALTQIASLFRIKEQYSKAAEYFQRIVTIESKN), 239–272 (GEVWGALGHCYLMMDDLQKAYTAYQQALYHLPNP), 275–308 (PNLWYGIGILYDRYGSYDHAEEAFTAVLKMDNKF), 312–345 (TEIYFRLGVLYKHQGKYDQSLEYFQHLVKNPPLP), 349–382 (SDIWFQIGHVYELQKEYHKSKDAYEKVLKDNATH), 384–419 (KVLQQLGWLYHHNPLFTNQEYAINYLMRSIDSDSSD), 420–453 (AQTWYLLGRCYMTQQKYKKAYDAYQQAVYRDGRN), 454–487 (PTFWCSIGVLYYQINQYRDALDAYTRAIRLNPFL), and 489–521 (EVWYDLGTLYESCHQHTDSLDAYQRAAELDPHN). 3 disordered regions span residues 539–596 (PIGK…NSFV), 632–938 (ERGR…YNNI), and 958–1390 (LDEE…KLER). Residues 540 to 557 (IGKDGYDLQNGEHGEHGG) are compositionally biased toward basic and acidic residues. Residues 582-593 (QNNRNGNNNGNN) show a composition bias toward low complexity. The segment covering 632-641 (ERGRGEDMHN) has biased composition (basic and acidic residues). Over residues 644–744 (HSQYSNSMSM…MNDNVNSKNN (101 aa)) the composition is skewed to low complexity. Basic and acidic residues predominate over residues 745–803 (DVLDRRYKGILEREKTSPNGDGRDNRDNIRDNRDNRDSRDGRDNRDGRDSRDRIQEYTR). Positions 805-846 (YNNNNNNNNSISSINNNNNNNNNNYNNNNNNNNNNNNNNNNN) are enriched in low complexity. Over residues 857 to 871 (HNDRRSYERDNKERI) the composition is skewed to basic and acidic residues. Low complexity-rich tracts occupy residues 872–898 (NNNNNNNNNMNNNMNNNMNNMNNNNNN) and 917–937 (NNSNNNNNNNNNNNNNINYNN). Basic and acidic residues-rich tracts occupy residues 977-993 (KEAEEKRETVIVDKERS), 1000-1029 (EKPDEKQVEKVTDKESSLVEKVDKENEKES), 1037-1099 (KEIE…EKES), and 1120-1135 (TKKDDSSKLPTDEKKL). Residues 1136–1146 (SSVSPTTTAVE) are compositionally biased toward polar residues. Positions 1147–1169 (QSRDETKELEMDTKEDSEKEKKS) are enriched in basic and acidic residues. Composition is skewed to low complexity over residues 1170–1180 (STTTTAAASES) and 1192–1203 (TTTTTTTTNTTT). Over residues 1206–1218 (PTHKDKESSKNDD) the composition is skewed to basic and acidic residues. The span at 1219–1228 (TTTTTTTTTT) shows a compositional bias: low complexity. Positions 1229–1239 (KSAKSPNSSPT) are enriched in polar residues. Positions 1240–1263 (RSDEVVEPHQDASQEEINKRKLED) are enriched in basic and acidic residues. 2 stretches are compositionally biased toward low complexity: residues 1277–1289 (STPSSATTASTPS) and 1315–1337 (SSSSSSSSSSSSTNTGSSSTNSS). Positions 1339–1374 (KNERDRDRERERERERDREREREREREREREREKNK) are enriched in basic and acidic residues.

This sequence belongs to the CYC8/SSN6 family. As to quaternary structure, associates with tupA to form the trfA-tupA corepressor complex.

The protein resides in the nucleus. Its function is as follows. Acts as a component of the trfA-tupA corepressor complex which is involved in the repression of many genes in a wide variety of physiological processes. May also be involved in the derepression of at least some target genes. The complex is recruited to target genes by interaction with DNA-bound transcriptional repressors. The complex recruits histone deacetylases to produce a repressive chromatin structure, interacts with hypoacetylated N-terminal tails of histones H3 and H4 that have been programmed for repression by the action of histone deacetylases and interferes directly with the transcriptional machinery by associating with the RNA polymerase II mediator complex. Required for normal growth and for aggregation in early development. Required for a proper chemotactic response to cAMP. This is General transcriptional corepressor trfA (trfA) from Dictyostelium discoideum (Social amoeba).